A 163-amino-acid chain; its full sequence is ADP-ribosylation factor-like protein 2-binding protein (163 aa).

It belongs to the ARL2BP family. As to quaternary structure, interacts with GTP bound ARL2 and ARL3; the complex ARL2-ARL2BP as well as ARL2BP alone, binds to SLC25A4/ANT1. Interaction with ARL2 may be required for targeting to cilia basal body. Interacts with STAT3; interaction is enhanced with ARL2. Found in a complex with ARL2BP, ARL2 and SLC25A6. Found in a complex with ARL2, ARL2BP and SLC25A4. Interacts with STAT2, STAT3 and STAT4. As to expression, widely expressed, with most abundant activity in brain, especially in hippocampus and cortex. Also expressed in lung, cerebellum, liver, kidney, retina, spleen, muscle and heart (at protein level).

The protein localises to the cytoplasm. The protein resides in the mitochondrion intermembrane space. Its subcellular location is the cytoskeleton. It is found in the microtubule organizing center. It localises to the centrosome. The protein localises to the nucleus. The protein resides in the cilium basal body. In terms of biological role, together with ARL2, plays a role in the nuclear translocation, retention and transcriptional activity of STAT3. May play a role as an effector of ARL2. This Mus musculus (Mouse) protein is ADP-ribosylation factor-like protein 2-binding protein (Arl2bp).